The chain runs to 83 residues: Cytochrome b559 subunit alpha (83 aa).

A helical transmembrane segment spans residues 21–35; the sequence is VIHSITIPSLFIAGW. Heme is bound at residue His23.

It belongs to the PsbE/PsbF family. As to quaternary structure, heterodimer of an alpha subunit and a beta subunit. PSII is composed of 1 copy each of membrane proteins PsbA, PsbB, PsbC, PsbD, PsbE, PsbF, PsbH, PsbI, PsbJ, PsbK, PsbL, PsbM, PsbT, PsbX, PsbY, PsbZ, Psb30/Ycf12, at least 3 peripheral proteins of the oxygen-evolving complex and a large number of cofactors. It forms dimeric complexes. The cofactor is heme b.

The protein resides in the plastid. It localises to the chloroplast thylakoid membrane. Functionally, this b-type cytochrome is tightly associated with the reaction center of photosystem II (PSII). PSII is a light-driven water:plastoquinone oxidoreductase that uses light energy to abstract electrons from H(2)O, generating O(2) and a proton gradient subsequently used for ATP formation. It consists of a core antenna complex that captures photons, and an electron transfer chain that converts photonic excitation into a charge separation. The protein is Cytochrome b559 subunit alpha of Daucus carota (Wild carrot).